Consider the following 450-residue polypeptide: UDP-N-acetylmuramoylalanine--D-glutamate ligase (450 aa).

119–125 (GSNGKTT) contributes to the ATP binding site.

This sequence belongs to the MurCDEF family.

It localises to the cytoplasm. The enzyme catalyses UDP-N-acetyl-alpha-D-muramoyl-L-alanine + D-glutamate + ATP = UDP-N-acetyl-alpha-D-muramoyl-L-alanyl-D-glutamate + ADP + phosphate + H(+). It participates in cell wall biogenesis; peptidoglycan biosynthesis. Its function is as follows. Cell wall formation. Catalyzes the addition of glutamate to the nucleotide precursor UDP-N-acetylmuramoyl-L-alanine (UMA). In Streptococcus pneumoniae (strain P1031), this protein is UDP-N-acetylmuramoylalanine--D-glutamate ligase.